We begin with the raw amino-acid sequence, 578 residues long: SCARECROW-LIKE protein 7 (578 aa).

A compositionally biased stretch (low complexity) spans 18 to 29; the sequence is VIQQQQQQQQQQ. Disordered stretches follow at residues 18 to 84 and 146 to 173; these read VIQQ…LAYG and PPPP…APRP. The span at 49-61 shows a compositional bias: basic residues; that stretch reads PHHHQQKHHHHHQ. Residues 62–74 show a composition bias toward low complexity; that stretch reads QMPAMPQAPPSSH. A compositionally biased stretch (pro residues) spans 146 to 156; that stretch reads PPPPVPSPPPT. Over residues 157 to 173 the composition is skewed to low complexity; it reads HAAATATATAATAAPRP. Positions 198–578 constitute a GRAS domain; the sequence is SADASCSAPI…RPLLTVSAWR (381 aa). Positions 205 to 264 are leucine repeat I (LRI); sequence APILQSLLSCSRAAATDPGLAAAELASVRAAATDAGDPSERLAFYFADALSRRLACGTGA. Residues 283 to 349 form a VHIID region; sequence YKTLNDACPY…GKPTRIRITG (67 aa). The VHIID motif lies at 314 to 318; it reads IHIVD. The tract at residues 365 to 397 is leucine repeat II (LRII); sequence ATNTRLRDFAKLLGVDFEFVPLLRPVHELNKSD. The tract at residues 406–497 is PFYRE; that stretch reads VAVNFMLQLY…RWMFGERIQR (92 aa). An LXXLL motif motif is present at residues 414–418; it reads LYHLL. The tract at residues 500–578 is SAW; sequence GPEEGADRTE…RPLLTVSAWR (79 aa).

This sequence belongs to the GRAS family. In terms of assembly, homodimer.

It is found in the nucleus. In terms of biological role, probable transcription factor involved in plant development. Involved in environmental abiotic stress resistance. May increase the expression of stress-responsive genes. Binds DNA in vitro. The protein is SCARECROW-LIKE protein 7 of Oryza sativa subsp. japonica (Rice).